The primary structure comprises 410 residues: Putative competence-damage inducible protein (410 aa).

Belongs to the CinA family.

The chain is Putative competence-damage inducible protein from Clostridium kluyveri (strain NBRC 12016).